Consider the following 73-residue polypeptide: Aminopeptidase G (73 aa).

The segment at 39-73 (GRRAASSSWPGRGSSRRWRPGRRTGAAARGCWRAP) is disordered. Composition is skewed to low complexity over residues 42-51 (AASSSWPGRG) and 61-73 (RTGA…WRAP).

It belongs to the peptidase M1 family. Zn(2+) serves as cofactor.

The protein localises to the cytoplasm. Functionally, hydrolyzes preferentially the N-terminal glycine and can also hydrolyze other amino acids which are used by PepN but is unable to hydrolyze basic amino acids. This chain is Aminopeptidase G (pepG), found in Streptomyces lividans.